The sequence spans 402 residues: Argininosuccinate synthase (402 aa).

Residue 9–17 coordinates ATP; sequence AYSGGLDTS. Position 87 (Tyr-87) interacts with L-citrulline. An ATP-binding site is contributed by Gly-117. L-aspartate contacts are provided by Thr-119, Asn-123, and Asp-124. Asn-123 contributes to the L-citrulline binding site. Residues Arg-127, Ser-176, Ser-185, Glu-261, and Tyr-273 each coordinate L-citrulline.

The protein belongs to the argininosuccinate synthase family. Type 1 subfamily. Homotetramer.

It localises to the cytoplasm. The enzyme catalyses L-citrulline + L-aspartate + ATP = 2-(N(omega)-L-arginino)succinate + AMP + diphosphate + H(+). It functions in the pathway amino-acid biosynthesis; L-arginine biosynthesis; L-arginine from L-ornithine and carbamoyl phosphate: step 2/3. The sequence is that of Argininosuccinate synthase from Chlorobium phaeobacteroides (strain BS1).